The following is a 649-amino-acid chain: 70 kDa protein (649 aa).

Disordered stretches follow at residues 28-80 (LRRG…DFSP), 257-286 (ALSL…AASD), 311-359 (TATS…SKQQ), and 458-550 (QSAE…PSSL). Positions 268–279 (KSTSPCNNSQLP) are enriched in polar residues. A compositionally biased stretch (basic residues) spans 330-349 (RLQRSLHLHSRSPHSSHFRP). Residues 504 to 515 (DVSNSETKNCPS) show a composition bias toward polar residues. 2 stretches are compositionally biased toward low complexity: residues 524–533 (PNHLHPLLPG) and 540–550 (PRQLSPSPSSL).

It belongs to the tymoviridae protein p69 family.

In Solanum lycopersicum (Tomato), this protein is 70 kDa protein.